The primary structure comprises 245 residues: tRNA pseudouridine synthase A (245 aa).

Catalysis depends on Asp52, which acts as the Nucleophile. Position 111 (Tyr111) interacts with substrate.

Belongs to the tRNA pseudouridine synthase TruA family. In terms of assembly, homodimer.

The enzyme catalyses uridine(38/39/40) in tRNA = pseudouridine(38/39/40) in tRNA. Formation of pseudouridine at positions 38, 39 and 40 in the anticodon stem and loop of transfer RNAs. The sequence is that of tRNA pseudouridine synthase A from Rickettsia canadensis (strain McKiel).